A 344-amino-acid chain; its full sequence is L-rhamnose-proton symporter (344 aa).

Transmembrane regions (helical) follow at residues 4–24 (AITM…CFYA), 38–58 (WSVG…ALLL), 68–88 (FSLS…IGNI), 101–121 (MGIG…TPII), 137–157 (TLLG…AGQL), 175–195 (LVLA…MNAA), 214–234 (LPSY…FCFI), 259–279 (VLLS…YAWG), 290–310 (ISWM…GLVL), and 323–343 (VLSL…IGMA).

The protein belongs to the L-rhamnose transporter (TC 2.A.7.6) family.

It localises to the cell inner membrane. It carries out the reaction L-rhamnopyranose(in) + H(+)(in) = L-rhamnopyranose(out) + H(+)(out). Uptake of L-rhamnose across the cytoplasmic membrane with the concomitant transport of protons into the cell (symport system). The sequence is that of L-rhamnose-proton symporter from Shigella flexneri.